Here is a 605-residue protein sequence, read N- to C-terminus: MPVRRLDPVLIDRIAAGEVIERPASALKELIENALDAGARRIDVAIEAGGRKLIRVVDDGCGMAPEDLDLAVERHATSKLPEGDLSSIETLGFRGEALPSIGSVAALEIFSRAMGSAVGARVKVDCGVKEGPAPAAQPQGTRVEIRDLFAGTPARLKFLRTDRAEARASAEIVERLAMAHPQVRFGFASSDVRGFDLAACADSPEGRLTRFSAVLGKDFRDNALFVEAEREGVRLQGFAGLPTWHRASAAAQHVFVNGRPVRDRLLLGAARAAYMDFLPSGRHAALVLFLTCDPREVDVNVHPAKAEVRFRDPGLTRGLIVGALKQTLADAQHRASPVNGASALDVLARRGPGFSGAGGPANWDWRRSPANPGFDAAALAGFAEAPAAAFAAVESLAADTRANAAAPSLEDLEAPLGAARAQIHETYIVSQTRDGIVIVDQHAAHERLVYERLKAARAGSKAPRQALLIPAIVELARAEVEAILDAAVLLAEFGLIIEPFGPGAVAVTETPALLQDPDPTRLARDLAAALVEDDGAAALERRFNLVLATMACHNSVRAGRRMRPEEMNALLRDMERTPGSGQCNHGRPTYVELKLADVEKLFGRR.

This sequence belongs to the DNA mismatch repair MutL/HexB family.

Functionally, this protein is involved in the repair of mismatches in DNA. It is required for dam-dependent methyl-directed DNA mismatch repair. May act as a 'molecular matchmaker', a protein that promotes the formation of a stable complex between two or more DNA-binding proteins in an ATP-dependent manner without itself being part of a final effector complex. The protein is DNA mismatch repair protein MutL of Methylocella silvestris (strain DSM 15510 / CIP 108128 / LMG 27833 / NCIMB 13906 / BL2).